Here is a 320-residue protein sequence, read N- to C-terminus: MAIGEQQVIVIGAGVSGLTSAICLAEAGWPVRVWAAALPQQTTSAVAGAVWGPRPKEPVAKVRGWIEQSLHVFRDLAKDPATGVRMTPALSVGDRIETGAMPPGLELIPDVRPADPADVPGGFRAGFHATLPMIDMPQYLDCLTQRLAATGCEIETRPLRSLAEAAEAAPIVINCAGLGARELAGDATVWPRFGQHVVLTNPGLEQLFIERTGGSEWICYFAHPQRVVCGGISIPGRWDPTPEPEITERILQRCRRIQPRLAEAAVIETITGLRPDRPSVRVEAEPIGRALCIHNYGHGGDGVTLSWGCAREVVNLVGGG.

The FAD site is built by Ala13, Gly14, Val15, Thr42, Thr43, Ser44, Gly48, and Ala49. Positions 220 and 274 each coordinate D-proline. D-serine contacts are provided by Tyr220 and Arg274. Residues Arg274, Gly299, Gly300, Gly302, and Thr304 each coordinate FAD. Gly300 lines the D-proline pocket. Gly300 serves as a coordination point for D-serine.

It belongs to the DAMOX/DASOX family. FAD serves as cofactor.

It is found in the cytoplasm. It localises to the secreted. The protein resides in the cell wall. It carries out the reaction a D-alpha-amino acid + O2 + H2O = a 2-oxocarboxylate + H2O2 + NH4(+). Catalyzes the oxidative deamination of D-amino acids with broad substrate specificity. Enables the organism to utilize D-amino acids as a source of nutrients. Enables the organism to utilize glycine as a carbon source. This is D-amino-acid oxidase from Mycobacterium tuberculosis (strain ATCC 25177 / H37Ra).